The following is a 407-amino-acid chain: Endo-1,4-beta-xylanase D (407 aa).

An N-terminal signal peptide occupies residues 1-19; that stretch reads MTLVKSILLALAAGHVAQA. Residues 20 to 333 enclose the GH10 domain; it reads QLNTAAKAAG…KPAYYGILAG (314 aa). A glycan (N-linked (GlcNAc...) asparagine) is linked at N118. Residue E148 is the Proton donor of the active site. Catalysis depends on E255, which acts as the Nucleophile. Cysteines 283 and 289 form a disulfide. Positions 337-364 are disordered; sequence GSGSSSSTSSTTLITTTTPTASSSTTSA. Residues 371–407 enclose the CBM1 domain; the sequence is SGAAHWGQCGGIGWSGPTICVSPYTCQVLNPYYSQCL.

This sequence belongs to the glycosyl hydrolase 10 (cellulase F) family.

The protein resides in the secreted. The catalysed reaction is Endohydrolysis of (1-&gt;4)-beta-D-xylosidic linkages in xylans.. Its pathway is glycan degradation; xylan degradation. Inhibited by wheat xylanase inhibiting protein I (XIP-I). Endo-1,4-beta-xylanase involved in the hydrolysis of xylan, a major structural heterogeneous polysaccharide found in plant biomass representing the second most abundant polysaccharide in the biosphere, after cellulose. Shows an endo-mode of action on xylan forming mainly xylobiose and short-chain xylooligosaccharides (XOS). In Talaromyces funiculosus (Fruitlet core rot fungus), this protein is Endo-1,4-beta-xylanase D (xynD).